The following is a 197-amino-acid chain: Outer membrane protein 26 (197 aa).

The N-terminal stretch at 1–23 (MKNIAKVTALALGIALASGYASA) is a signal peptide.

Belongs to the Skp family.

It is found in the cell outer membrane. In Haemophilus influenzae (strain ATCC 51907 / DSM 11121 / KW20 / Rd), this protein is Outer membrane protein 26 (omp26).